The chain runs to 499 residues: Glycerol kinase (499 aa).

Threonine 17 contacts ADP. ATP-binding residues include threonine 17, threonine 18, and serine 19. A sn-glycerol 3-phosphate-binding site is contributed by threonine 17. Residue arginine 21 participates in ADP binding. Arginine 87, glutamate 88, tyrosine 139, and aspartate 243 together coordinate sn-glycerol 3-phosphate. Glycerol-binding residues include arginine 87, glutamate 88, tyrosine 139, aspartate 243, and glutamine 244. 2 residues coordinate ADP: threonine 265 and glycine 308. ATP-binding residues include threonine 265, glycine 308, glutamine 312, and glycine 409. Glycine 409 and asparagine 413 together coordinate ADP.

The protein belongs to the FGGY kinase family.

It carries out the reaction glycerol + ATP = sn-glycerol 3-phosphate + ADP + H(+). It participates in polyol metabolism; glycerol degradation via glycerol kinase pathway; sn-glycerol 3-phosphate from glycerol: step 1/1. Inhibited by fructose 1,6-bisphosphate (FBP). Functionally, key enzyme in the regulation of glycerol uptake and metabolism. Catalyzes the phosphorylation of glycerol to yield sn-glycerol 3-phosphate. The chain is Glycerol kinase from Pseudomonas putida (strain GB-1).